A 286-amino-acid chain; its full sequence is L-cysteine S-thiosulfotransferase subunit SoxA (286 aa).

An N-terminal signal peptide occupies residues 1–26 (MTVSKRFLAPVFAMVGGLVLAFSANA). Residues 80–166 (LAVERGADIW…ALTSYIKHQS (87 aa)) enclose the Cytochrome c domain. Positions 100, 103, 104, 138, 202, 205, and 206 each coordinate heme. Arginine 243 contributes to the substrate binding site. Cysteine 247 contributes to the heme binding site. Catalysis depends on cysteine 247, which acts as the Cysteine persulfide intermediate.

It belongs to the SoxA family. Heterodimer of SoxA and SoxX. Heme serves as cofactor. In terms of processing, cysteine persulfide at Cys-247.

The protein resides in the periplasm. It catalyses the reaction L-cysteinyl-[SoxY protein] + thiosulfate + 2 Fe(III)-[cytochrome c] = S-sulfosulfanyl-L-cysteinyl-[SoxY protein] + 2 Fe(II)-[cytochrome c] + 2 H(+). The catalysed reaction is S-sulfanyl-L-cysteinyl-[SoxY protein] + thiosulfate + 2 Fe(III)-[cytochrome c] = S-(2-sulfodisulfanyl)-L-cysteinyl-[SoxY protein] + 2 Fe(II)-[cytochrome c] + 2 H(+). In terms of biological role, C-type diheme cytochrome, which is part of the SoxAX cytochrome complex involved in sulfur oxidation. The SoxAX complex catalyzes the formation of a heterodisulfide bond between the conserved cysteine residue on a sulfur carrier SoxYZ complex subunit SoxY and thiosulfate or other inorganic sulfur substrates. This leads to the liberation of two electrons, which may be transferred from the SoxAX complex to another cytochrome c that then channels them into the respiratory electron transport chain. Some electrons may be used for reductive CO(2) fixation. In Pseudaminobacter salicylatoxidans, this protein is L-cysteine S-thiosulfotransferase subunit SoxA.